The following is a 175-amino-acid chain: Alkyl hydroperoxide reductase AhpD (175 aa).

The active-site Proton donor is cysteine 131. A disulfide bridge links cysteine 131 with cysteine 134. The active-site Cysteine sulfenic acid (-SOH) intermediate is cysteine 134.

The protein belongs to the AhpD family.

The catalysed reaction is N(6)-[(R)-dihydrolipoyl]-L-lysyl-[lipoyl-carrier protein] + a hydroperoxide = N(6)-[(R)-lipoyl]-L-lysyl-[lipoyl-carrier protein] + an alcohol + H2O. Its function is as follows. Antioxidant protein with alkyl hydroperoxidase activity. Required for the reduction of the AhpC active site cysteine residues and for the regeneration of the AhpC enzyme activity. This Brucella abortus (strain 2308) protein is Alkyl hydroperoxide reductase AhpD.